Reading from the N-terminus, the 106-residue chain is Large ribosomal subunit protein eL42 (106 aa).

The protein belongs to the eukaryotic ribosomal protein eL42 family.

In Schwanniomyces occidentalis (Yeast), this protein is Large ribosomal subunit protein eL42 (RPL44).